We begin with the raw amino-acid sequence, 568 residues long: Sulfite reductase [NADPH] hemoprotein beta-component (568 aa).

Residues cysteine 426, cysteine 432, cysteine 471, and cysteine 475 each contribute to the [4Fe-4S] cluster site. Position 475 (cysteine 475) interacts with siroheme.

It belongs to the nitrite and sulfite reductase 4Fe-4S domain family. As to quaternary structure, alpha(8)-beta(8). The alpha component is a flavoprotein, the beta component is a hemoprotein. It depends on siroheme as a cofactor. The cofactor is [4Fe-4S] cluster.

It catalyses the reaction hydrogen sulfide + 3 NADP(+) + 3 H2O = sulfite + 3 NADPH + 4 H(+). It functions in the pathway sulfur metabolism; hydrogen sulfide biosynthesis; hydrogen sulfide from sulfite (NADPH route): step 1/1. In terms of biological role, component of the sulfite reductase complex that catalyzes the 6-electron reduction of sulfite to sulfide. This is one of several activities required for the biosynthesis of L-cysteine from sulfate. The polypeptide is Sulfite reductase [NADPH] hemoprotein beta-component (Xylella fastidiosa (strain 9a5c)).